The following is a 363-amino-acid chain: UDP-N-acetylglucosamine--N-acetylmuramyl-(pentapeptide) pyrophosphoryl-undecaprenol N-acetylglucosamine transferase (363 aa).

UDP-N-acetyl-alpha-D-glucosamine is bound by residues 10 to 12, Asn124, Ser195, Ile250, and Gln295; that span reads TGG.

Belongs to the glycosyltransferase 28 family. MurG subfamily.

The protein localises to the cell membrane. The catalysed reaction is di-trans,octa-cis-undecaprenyl diphospho-N-acetyl-alpha-D-muramoyl-L-alanyl-D-glutamyl-meso-2,6-diaminopimeloyl-D-alanyl-D-alanine + UDP-N-acetyl-alpha-D-glucosamine = di-trans,octa-cis-undecaprenyl diphospho-[N-acetyl-alpha-D-glucosaminyl-(1-&gt;4)]-N-acetyl-alpha-D-muramoyl-L-alanyl-D-glutamyl-meso-2,6-diaminopimeloyl-D-alanyl-D-alanine + UDP + H(+). The protein operates within cell wall biogenesis; peptidoglycan biosynthesis. Functionally, cell wall formation. Catalyzes the transfer of a GlcNAc subunit on undecaprenyl-pyrophosphoryl-MurNAc-pentapeptide (lipid intermediate I) to form undecaprenyl-pyrophosphoryl-MurNAc-(pentapeptide)GlcNAc (lipid intermediate II). In Halalkalibacterium halodurans (strain ATCC BAA-125 / DSM 18197 / FERM 7344 / JCM 9153 / C-125) (Bacillus halodurans), this protein is UDP-N-acetylglucosamine--N-acetylmuramyl-(pentapeptide) pyrophosphoryl-undecaprenol N-acetylglucosamine transferase.